A 144-amino-acid chain; its full sequence is Large ribosomal subunit protein uL11 (144 aa).

The protein belongs to the universal ribosomal protein uL11 family. Part of the ribosomal stalk of the 50S ribosomal subunit. Interacts with L10 and the large rRNA to form the base of the stalk. L10 forms an elongated spine to which L12 dimers bind in a sequential fashion forming a multimeric L10(L12)X complex. In terms of processing, one or more lysine residues are methylated.

In terms of biological role, forms part of the ribosomal stalk which helps the ribosome interact with GTP-bound translation factors. This is Large ribosomal subunit protein uL11 from Corynebacterium glutamicum (strain R).